Here is a 593-residue protein sequence, read N- to C-terminus: Probable tripeptidyl-peptidase SED3 (593 aa).

The N-terminal stretch at 1-18 is a signal peptide; the sequence is MLLRWHSVIPLFLAMTVA. The propeptide at 19–198 is removed in mature form; it reads FPNTYRTVVE…NLQAIYLSTN (180 aa). Asn-204, Asn-261, and Asn-275 each carry an N-linked (GlcNAc...) asparagine glycan. The Peptidase S53 domain occupies 206-592; the sequence is TITPRCLREL…RILAKIVQHM (387 aa). Active-site charge relay system residues include Glu-282 and Asp-286. A glycan (N-linked (GlcNAc...) asparagine) is linked at Asn-295. Ser-496 acts as the Charge relay system in catalysis. Ca(2+)-binding residues include Asp-538 and Ile-539. N-linked (GlcNAc...) asparagine glycosylation is found at Asn-554 and Asn-566. Ca(2+)-binding residues include Gly-570 and Asp-572.

Ca(2+) is required as a cofactor.

The protein resides in the secreted. It is found in the extracellular space. The enzyme catalyses Release of an N-terminal tripeptide from a polypeptide.. Its function is as follows. Secreted tripeptidyl-peptidase which degrades proteins at acidic pHs and is involved in virulence. This is Probable tripeptidyl-peptidase SED3 (SED3) from Arthroderma benhamiae (strain ATCC MYA-4681 / CBS 112371) (Trichophyton mentagrophytes).